Here is a 387-residue protein sequence, read N- to C-terminus: Phosphoglycerate kinase (387 aa).

Substrate is bound by residues 21–23, Arg36, 59–62, Arg113, and Arg146; these read DLN and HLGR. ATP is bound by residues Lys197, Glu314, and 340-343; that span reads GGDT.

It belongs to the phosphoglycerate kinase family. As to quaternary structure, monomer.

Its subcellular location is the cytoplasm. It catalyses the reaction (2R)-3-phosphoglycerate + ATP = (2R)-3-phospho-glyceroyl phosphate + ADP. It functions in the pathway carbohydrate degradation; glycolysis; pyruvate from D-glyceraldehyde 3-phosphate: step 2/5. The sequence is that of Phosphoglycerate kinase from Pseudomonas putida (strain ATCC 47054 / DSM 6125 / CFBP 8728 / NCIMB 11950 / KT2440).